We begin with the raw amino-acid sequence, 4059 residues long: Fibrocystin (4059 aa).

The N-terminal stretch at 1–18 is a signal peptide; it reads MMLAWLVSLLSMEVLLLA. Topologically, residues 19–3851 are extracellular; sequence KPYSSFQFEP…LPVASKERST (3833 aa). The IPT/TIG 1; atypical domain occupies 25–109; sequence QFEPAEGSLA…AGPYSLEMRS (85 aa). Asn55 and Asn224 each carry an N-linked (GlcNAc...) asparagine glycan. 2 consecutive IPT/TIG domains span residues 135–230 and 257–333; these read PVLY…FSVF and PEIL…FEVG. The region spanning 323–483 is the PA14 domain; that stretch reads AGNRGLRFEV…TWLNPDVVNT (161 aa). Residues Asn355, Asn385, Asn518, Asn527, Asn620, Asn639, Asn709, Asn867, Asn965, Asn975, Asn1082, Asn1114, Asn1133, Asn1239, Asn1273, Asn1308, Asn1319, Asn1344, Asn1373, Asn1456, Asn1471, Asn1528, Asn1613, Asn1627, Asn1694, Asn1760, Asn1775, Asn1875, Asn1879, Asn1915, Asn1955, Asn2030, and Asn2139 are each glycosylated (N-linked (GlcNAc...) asparagine). IPT/TIG domains lie at 945 to 997 and 1017 to 1100; these read LVHF…FMLV and PRLD…AFTY. Residues 1106–1190 form the IPT/TIG 6; atypical domain; sequence PVIVSLSRNR…IRSQGVDLYI (85 aa). Positions 1198-1266 constitute an IPT/TIG 7 domain; the sequence is SVEPCSGSLL…RADVLTVLAS (69 aa). Positions 1297–1378 constitute an IPT/TIG 8; atypical domain; the sequence is PVVTAMWGEF…MGFANMSVVP (82 aa). One can recognise an IPT/TIG 9 domain in the interval 1385-1466; that stretch reads PQIIAIFPTH…ITVLVNGLTS (82 aa). IPT/TIG domains are found at residues 1482 to 1566 and 1569 to 1637; these read PIVD…RNFF and PQVL…IDVN. Positions 1654–1738 constitute an IPT/TIG 12; atypical domain; the sequence is PELLSVSRSQ…VLRATVTSVT (85 aa). One can recognise a G8 1 domain in the interval 1928–2049; it reads HSWFPQRVPH…PEVTVTYLQA (122 aa). PbH1 repeat units follow at residues 2244–2266 and 2287–2321; these read TWGL…LLGS and EQGS…YTFS. A glycan (N-linked (GlcNAc...) asparagine) is linked at Asn2380. PbH1 repeat units follow at residues 2404-2426 and 2459-2481; these read SNNL…DILE and RWEL…AIRT. 9 N-linked (GlcNAc...) asparagine glycosylation sites follow: Asn2466, Asn2503, Asn2529, Asn2547, Asn2581, Asn2589, Asn2627, Asn2747, and Asn2762. One can recognise a G8 2 domain in the interval 2741 to 2867; the sequence is KGWGGYNHTI…PKKSWVHLGA (127 aa). 2 PbH1 repeats span residues 3004–3026 and 3027–3049; these read SAGS…HASS and SHGV…DVEG. N-linked (GlcNAc...) asparagine glycosylation is present at Asn3051. The stretch at 3080-3102 is one PbH1 7 repeat; it reads AEDIILHGNVVAGSERLGFHVGG. 2 N-linked (GlcNAc...) asparagine glycosylation sites follow: Asn3133 and Asn3162. The stretch at 3188 to 3212 is one PbH1 8 repeat; that stretch reads TVQITLRNSVIVATSSSFDCIHDRK. N-linked (GlcNAc...) asparagine glycans are attached at residues Asn3218, Asn3719, and Asn3831. The helical transmembrane segment at 3852-3872 threads the bilayer; it reads IILALSLCSVASWVALSCLVC. Residues 3869–3886 form a ciliary targeting sequence (CST) region; that stretch reads CLVCCWFKKSKTRKIKPE. The Cytoplasmic portion of the chain corresponds to 3873–4059; it reads CWFKKSKTRK…LHTAPPETIQ (187 aa). The span at 3885 to 3898 shows a compositional bias: basic and acidic residues; the sequence is PEDISESQAKEQKK. Positions 3885 to 3915 are disordered; that stretch reads PEDISESQAKEQKKNTHNSSKPRGLQAKTAK. A nuclear localization signal (NLS) region spans residues 3946–3970; that stretch reads KRKVSRLAVTEERTTTPAPKIPRIT. A disordered region spans residues 4015-4038; the sequence is QERKQGQEPSQLDKGSDCTGLSQE.

In terms of assembly, interacts with CAMLG. Interacts with PKD2. Interacts (via CST) with ARF4; this interaction allows an efficient PKHD1 trafficking to the cilium. Interacts (via CST) with RAB8A; this interaction controls trafficking through the endomembrane systeme and to the cilium. Interacts (via CST) with TULP3; this interaction allows PKHD1 trafficking to the cilium. In terms of processing, palmitoylated. Palmitoylation facilitates the trafficking to the cilia and membrane targeting. N-glycosylated. Post-translationally, several proteolytic cleavages occur within the extracellular domain, whereas at least one cleavage occurs within the cytoplasmic domain. Cleaved by a probable proprotein convertase which produces an extracellular domain (polyductin extracellular domain, (PECD)) and a C-terminal fragment (polyductin transmembrane fragment (PTM)) which are tethered together by disulfide bonds. This extracellular domain (PECD) is then shed from the primary cilium by activation of a member of the ADAM metalloproteinase disintegrins family, resulting in concomitant release of an intra-cellular C-terminal fragment (ICD) via a gamma-secretase-dependent process. The proteolytic cleavage of the C-terminal intracellular fragment (ICD) is controlled by cytosolic calcium concentration and activation of PKC. Expressed in bile ducts and distal nephron segments but is absent from the proximal tubule. Expressed in pancreas and kidney but also in the liver. Expressed primarily in the distal tubule and thick ascending limb of the loop of Henle, and at low-level in the proximal tubule before renal development is complete at P0.

It is found in the cell membrane. Its subcellular location is the cytoplasm. The protein localises to the apical cell membrane. It localises to the cytoskeleton. The protein resides in the cilium basal body. It is found in the cell projection. Its subcellular location is the cilium. The protein localises to the spindle. It localises to the chromosome. The protein resides in the centromere. It is found in the nucleus. Its subcellular location is the secreted. The protein localises to the extracellular exosome. It localises to the endoplasmic reticulum. The protein resides in the golgi apparatus. Functionally, promotes ciliogenesis in renal epithelial cells and therefore participates in the tubules formation and/or ensures the maintenance of the architecture of the lumen of the kidney. Has an impact on cellular symmetry by ensuring correct bipolar cell division through the regulation of centrosome duplication and mitotic spindle assembly and by maintaining oriented cell division (OCD) during tubular elongation through planar cell polarity (PCP) pathway. During epithelial cell morphogenesis, it also regulates cell-cell and cell-matrix adhesion and participates in cell motility. Promotes cell-cell contact through the positive regulation of PTK2 kinase activity leading to either positive regulation of epithelial cell proliferation through the HRAS/RAF1 pathways, or negative regulation of apoptosis through the PDK1/AKT1 pathway. May act in collecting-duct and biliary differentiation. May participate in the regulation of the cholangiocytes proliferation and the CCN2 production in an CXCL8-dependent manner. The polypeptide is Fibrocystin (Mus musculus (Mouse)).